A 472-amino-acid polypeptide reads, in one-letter code: Argininosuccinate lyase (472 aa).

This sequence belongs to the lyase 1 family. Argininosuccinate lyase subfamily.

It is found in the cytoplasm. It catalyses the reaction 2-(N(omega)-L-arginino)succinate = fumarate + L-arginine. Its pathway is amino-acid biosynthesis; L-arginine biosynthesis; L-arginine from L-ornithine and carbamoyl phosphate: step 3/3. The polypeptide is Argininosuccinate lyase (Polynucleobacter asymbioticus (strain DSM 18221 / CIP 109841 / QLW-P1DMWA-1) (Polynucleobacter necessarius subsp. asymbioticus)).